The chain runs to 246 residues: Acetoacetyl-CoA reductase (246 aa).

NADP(+) is bound by residues 13–15 (GGI), glycine 35, arginine 40, 60–62 (GNV), and 88–92 (NAGIT). Substrate contacts are provided by residues aspartate 94 and 147-150 (QFGQ). The Proton acceptor role is filled by tyrosine 153. 183–186 (PGYI) lines the NADP(+) pocket. Residues 184-185 (GY) and arginine 195 contribute to the substrate site.

The protein belongs to the short-chain dehydrogenases/reductases (SDR) family. As to quaternary structure, homotetramer.

It localises to the cytoplasm. The enzyme catalyses a (3R)-3-hydroxyacyl-CoA + NADP(+) = a 3-oxoacyl-CoA + NADPH + H(+). It carries out the reaction (3R)-3-hydroxybutanoyl-CoA + NADP(+) = acetoacetyl-CoA + NADPH + H(+). It functions in the pathway biopolymer metabolism; poly-(R)-3-hydroxybutanoate biosynthesis. Catalyzes the chiral reduction of acetoacetyl-CoA to (R)-3-hydroxybutyryl-CoA. Is involved in the biosynthesis of polyhydroxybutyrate (PHB), which is accumulated as an intracellular energy reserve material when cells grow under conditions of nutrient limitation. The chain is Acetoacetyl-CoA reductase from Cupriavidus necator (strain ATCC 17699 / DSM 428 / KCTC 22496 / NCIMB 10442 / H16 / Stanier 337) (Ralstonia eutropha).